The chain runs to 295 residues: Excinuclease cho (295 aa).

One can recognise a GIY-YIG domain in the interval 33–108 (TRPGVYLFHG…IKEQQPLFNK (76 aa)).

Functionally, incises the DNA at the 3' side of a lesion during nucleotide excision repair. Incises the DNA farther away from the lesion than UvrC. Not able to incise the 5' site of a lesion. When a lesion remains because UvrC is not able to induce the 3' incision, Cho incises the DNA. Then UvrC makes the 5' incision. The combined action of Cho and UvrC broadens the substrate range of nucleotide excision repair. This chain is Excinuclease cho (cho), found in Shigella flexneri.